The chain runs to 298 residues: 1,2-dihydroxynaphthalene dioxygenase (298 aa).

2 consecutive VOC domains span residues 6 to 121 (ELGY…IFYG) and 146 to 267 (GIGH…FGWG). His-149 is a Fe cation binding site. Substrate contacts are provided by residues His-149, 196-197 (QH), His-212, and Tyr-253. His-212 contributes to the Fe cation binding site. Glu-263 contacts Fe cation.

This sequence belongs to the extradiol ring-cleavage dioxygenase family. Homooctamer. Fe(2+) serves as cofactor.

The enzyme catalyses naphthalene-1,2-diol + O2 = 2-hydroxychromene-2-carboxylate + H(+). Its pathway is aromatic compound metabolism; naphthalene degradation. In terms of biological role, involved in the naphthalene and naphthalenesulfonate catabolic pathway. Catalyzes the meta-cleavage of 1,2-dihydroxynaphthalene (1,2-DHN) to yield 2-hydroxychromene-2-carboxylic acid. Can also cleave 1,2,5-trihydroxynaphthalene (1,2,5-THN), 1,2,6-trihydroxynaphthalene (1,2,6-THN), 1,2,7-trihydroxynaphthalene (1,2,7-THN), 2,3-dihydroxybiphenyl, 3,4-dihydroxybiphenyl, catechol, 3-methylcatechol and 4-methylcatechol. The protein is 1,2-dihydroxynaphthalene dioxygenase (nsaC) of Sphingobium xenophagum.